A 259-amino-acid chain; its full sequence is Ribonuclease PH (259 aa).

Phosphate is bound by residues Arg-88 and 126-128; that span reads GTR.

The protein belongs to the RNase PH family. As to quaternary structure, homohexameric ring arranged as a trimer of dimers.

The catalysed reaction is tRNA(n+1) + phosphate = tRNA(n) + a ribonucleoside 5'-diphosphate. Functionally, phosphorolytic 3'-5' exoribonuclease that plays an important role in tRNA 3'-end maturation. Removes nucleotide residues following the 3'-CCA terminus of tRNAs; can also add nucleotides to the ends of RNA molecules by using nucleoside diphosphates as substrates, but this may not be physiologically important. Probably plays a role in initiation of 16S rRNA degradation (leading to ribosome degradation) during starvation. This is Ribonuclease PH from Mycolicibacterium paratuberculosis (strain ATCC BAA-968 / K-10) (Mycobacterium paratuberculosis).